A 23-amino-acid polypeptide reads, in one-letter code: Phospholipase A1 verutoxin-1 (23 aa).

Belongs to the AB hydrolase superfamily. Lipase family. In terms of processing, contains six disulfide bonds. Expressed by the venom gland.

It localises to the secreted. The catalysed reaction is a 1,2-diacyl-sn-glycero-3-phosphocholine + H2O = a 2-acyl-sn-glycero-3-phosphocholine + a fatty acid + H(+). The enzyme catalyses 1-(9Z-octadecenoyl)-2-hexadecanoyl-sn-glycero-3-phosphocholine + H2O = 2-hexadecanoyl-sn-glycero-3-phosphocholine + (9Z)-octadecenoate + H(+). It carries out the reaction a 1-acyl-sn-glycero-3-phosphocholine + H2O = sn-glycerol 3-phosphocholine + a fatty acid + H(+). The protein operates within phospholipid metabolism. Activity is maximal in the presence of calcium. However, unlike phospholipases A2 whose catalytic activity is strictly calcium-dependent, this enzyme shows considerable catalytic activity on phosphatidylcholine emulsified in calcium free solution; the catalytic activity of VT-1 assayed in the absence of calcium ions is 18-20% of that assayed in solution containing calcium ions. Functionally, catalyzes the hydrolysis of glycerophospholipids such as phosphatidylcholine (1,2-diacyl-sn-glycero-3-phosphocholine) and has a moderate activity to hydrolyze lysoglycerophospholipids such as lysophosphatidylcholine (1-acyl-sn-glycero-3-phosphocholine), but is unable to hydrolyze sphingomyelin. Liberates the fatty acid from the sn-1 position of 1,2-diacyl-sn-glycero-3-phosphocholine mainly, indicating phospholipase activity of the A1 type. In addition to acting as an allergen, it possesses a moderate hemolytic activity on red blood cells of mice (3% of hemolysis at 3.0 ug/ml). This Vespa velutina (Asian yellow-legged hornet) protein is Phospholipase A1 verutoxin-1.